The sequence spans 177 residues: Protein-export protein SecB (177 aa).

The tract at residues 1 to 22 (MSDENNSGAAAPEAQNPGQNAA) is disordered. Residues 8–22 (GAAAPEAQNPGQNAA) are compositionally biased toward low complexity.

This sequence belongs to the SecB family. Homotetramer, a dimer of dimers. One homotetramer interacts with 1 SecA dimer.

It localises to the cytoplasm. Functionally, one of the proteins required for the normal export of preproteins out of the cell cytoplasm. It is a molecular chaperone that binds to a subset of precursor proteins, maintaining them in a translocation-competent state. It also specifically binds to its receptor SecA. The sequence is that of Protein-export protein SecB from Paracoccus denitrificans (strain Pd 1222).